The chain runs to 95 residues: Acylphosphatase (95 aa).

One can recognise an Acylphosphatase-like domain in the interval 7–95 (RLTAWVLGTV…PKGEVGFRTR (89 aa)). Catalysis depends on residues Arg22 and Asn40.

Belongs to the acylphosphatase family.

The enzyme catalyses an acyl phosphate + H2O = a carboxylate + phosphate + H(+). In Corynebacterium diphtheriae (strain ATCC 700971 / NCTC 13129 / Biotype gravis), this protein is Acylphosphatase (acyP).